The primary structure comprises 309 residues: Elongation factor Ts (309 aa).

The interval T82–V85 is involved in Mg(2+) ion dislocation from EF-Tu.

The protein belongs to the EF-Ts family.

It localises to the cytoplasm. Functionally, associates with the EF-Tu.GDP complex and induces the exchange of GDP to GTP. It remains bound to the aminoacyl-tRNA.EF-Tu.GTP complex up to the GTP hydrolysis stage on the ribosome. The sequence is that of Elongation factor Ts from Rickettsia typhi (strain ATCC VR-144 / Wilmington).